A 111-amino-acid polypeptide reads, in one-letter code: Iron-sulfur cluster insertion protein ErpA (111 aa).

The iron-sulfur cluster site is built by Cys39, Cys103, and Cys105.

The protein belongs to the HesB/IscA family. Homodimer. Iron-sulfur cluster is required as a cofactor.

Functionally, required for insertion of 4Fe-4S clusters for at least IspG. The chain is Iron-sulfur cluster insertion protein ErpA from Acinetobacter baumannii (strain AB307-0294).